Reading from the N-terminus, the 184-residue chain is Thymidine kinase (184 aa).

Residues Gly-15–Ser-22 and Asp-89–Gln-92 contribute to the ATP site. The active-site Proton acceptor is Glu-90. Residues Cys-146, Cys-149, Cys-178, and Cys-181 each contribute to the Zn(2+) site.

This sequence belongs to the thymidine kinase family. Homotetramer.

It localises to the cytoplasm. The catalysed reaction is thymidine + ATP = dTMP + ADP + H(+). This is Thymidine kinase from Mesomycoplasma hyopneumoniae (strain 232) (Mycoplasma hyopneumoniae).